The sequence spans 493 residues: Solute carrier family 2, facilitated glucose transporter member 3 (493 aa).

The Cytoplasmic segment spans residues Met-1–Leu-10. A helical membrane pass occupies residues Val-11–Asn-32. Over Ala-33–Ser-64 the chain is Extracellular. N-linked (GlcNAc...) asparagine glycosylation occurs at Asn-43. Residues Leu-65–Val-85 form a helical membrane-spanning segment. The Cytoplasmic portion of the chain corresponds to Asn-86 to Arg-90. Residues Arg-91–Ala-111 traverse the membrane as a helical segment. Topologically, residues Lys-112–Glu-118 are extracellular. Residues Met-119 to Ile-142 form a helical membrane-spanning segment. The Cytoplasmic portion of the chain corresponds to Gly-143–Ala-153. The chain crosses the membrane as a helical span at residues Phe-154 to Leu-174. Gln-159 is a binding site for D-glucose. Over Asp-175–Leu-183 the chain is Extracellular. A helical transmembrane segment spans residues Trp-184–Phe-204. The Cytoplasmic portion of the chain corresponds to Cys-205–Pro-269. Residue Thr-232 is modified to Phosphothreonine. The chain crosses the membrane as a helical span at residues Leu-270–Tyr-290. Residues Gln-277 to Ser-279 are important for selectivity against fructose. Residues Gln-280–Gln-281 and Asn-286 contribute to the D-glucose site. Residues Tyr-291–Pro-304 lie on the Extracellular side of the membrane. Residues Ile-305 to Leu-325 traverse the membrane as a helical segment. A D-glucose-binding site is contributed by Asn-315. The Cytoplasmic segment spans residues Val-326–Arg-331. Residues Arg-332–Ser-352 traverse the membrane as a helical segment. The Extracellular portion of the chain corresponds to Leu-353–Ser-363. The chain crosses the membrane as a helical span at residues Phe-364–Val-389. Residues Glu-378 and Trp-386 each coordinate D-glucose. The Cytoplasmic segment spans residues Ala-390–Pro-399. The chain crosses the membrane as a helical span at residues Ala-400 to Phe-420. The Extracellular segment spans residues Pro-421–Ala-429. Residues Tyr-430–Val-450 traverse the membrane as a helical segment. The Cytoplasmic segment spans residues Pro-451–Ala-493. Positions Ala-469–Ala-493 are disordered. Residues Ser-471 and Ser-482 each carry the phosphoserine modification. Thr-489 carries the post-translational modification Phosphothreonine.

The protein belongs to the major facilitator superfamily. Sugar transporter (TC 2.A.1.1) family. Glucose transporter subfamily. In terms of assembly, interacts with SMIM43; the interaction may promote SLC2A3-mediated glucose transport to meet the energy needs of mesendoderm differentiation. In terms of tissue distribution, expressed in spermatozoa (at protein level). Detected in brain (at protein level). Abundantly expressed in the hippocampus, cerebellum and cerebral cortex with lower expression in the dentate gyrus and piriform cortex.

It localises to the cell membrane. The protein resides in the perikaryon. The protein localises to the cell projection. The catalysed reaction is D-glucose(out) = D-glucose(in). The enzyme catalyses D-galactose(in) = D-galactose(out). Deoxyglucose transport is inhibited by D-glucose, D-galactose and maltose. Galactose transport is inhibited by D-glucose and maltose. Its function is as follows. Facilitative glucose transporter. Can also mediate the uptake of various other monosaccharides across the cell membrane. Mediates the uptake of glucose, 2-deoxyglucose, galactose, mannose, xylose and fucose, and probably also dehydroascorbate. Does not mediate fructose transport. Required for mesendoderm differentiation. The chain is Solute carrier family 2, facilitated glucose transporter member 3 from Mus musculus (Mouse).